Here is a 90-residue protein sequence, read N- to C-terminus: RNA-binding protein Hfq (90 aa).

The Sm domain occupies 9 to 68; it reads DPFLNALRRERVPVSIYLVNGIKLQGQVESFDQFVILLKNTVSQMVYKHAISTVVPARPF.

The protein belongs to the Hfq family. As to quaternary structure, homohexamer.

Functionally, RNA chaperone that binds small regulatory RNA (sRNAs) and mRNAs to facilitate mRNA translational regulation in response to envelope stress, environmental stress and changes in metabolite concentrations. Also binds with high specificity to tRNAs. The chain is RNA-binding protein Hfq from Shewanella oneidensis (strain ATCC 700550 / JCM 31522 / CIP 106686 / LMG 19005 / NCIMB 14063 / MR-1).